A 244-amino-acid chain; its full sequence is Phosphoribosyl isomerase A (244 aa).

Aspartate 10 functions as the Proton acceptor in the catalytic mechanism. Catalysis depends on aspartate 129, which acts as the Proton donor.

Belongs to the HisA/HisF family.

The protein localises to the cytoplasm. It carries out the reaction 1-(5-phospho-beta-D-ribosyl)-5-[(5-phospho-beta-D-ribosylamino)methylideneamino]imidazole-4-carboxamide = 5-[(5-phospho-1-deoxy-D-ribulos-1-ylimino)methylamino]-1-(5-phospho-beta-D-ribosyl)imidazole-4-carboxamide. It catalyses the reaction N-(5-phospho-beta-D-ribosyl)anthranilate = 1-(2-carboxyphenylamino)-1-deoxy-D-ribulose 5-phosphate. Its pathway is amino-acid biosynthesis; L-histidine biosynthesis; L-histidine from 5-phospho-alpha-D-ribose 1-diphosphate: step 4/9. The protein operates within amino-acid biosynthesis; L-tryptophan biosynthesis; L-tryptophan from chorismate: step 3/5. Involved in both the histidine and tryptophan biosynthetic pathways. The polypeptide is Phosphoribosyl isomerase A (priA) (Mycobacterium tuberculosis (strain CDC 1551 / Oshkosh)).